The following is a 497-amino-acid chain: 3-octaprenyl-4-hydroxybenzoate carboxy-lyase (497 aa).

N175 provides a ligand contact to Mn(2+). Prenylated FMN is bound by residues I178–R180, R192–L194, and R197–G198. E241 serves as a coordination point for Mn(2+). Catalysis depends on D290, which acts as the Proton donor.

The protein belongs to the UbiD family. Homohexamer. The cofactor is prenylated FMN. Mn(2+) is required as a cofactor.

It is found in the cell membrane. The catalysed reaction is a 4-hydroxy-3-(all-trans-polyprenyl)benzoate + H(+) = a 2-(all-trans-polyprenyl)phenol + CO2. The protein operates within cofactor biosynthesis; ubiquinone biosynthesis. Functionally, catalyzes the decarboxylation of 3-octaprenyl-4-hydroxy benzoate to 2-octaprenylphenol, an intermediate step in ubiquinone biosynthesis. This is 3-octaprenyl-4-hydroxybenzoate carboxy-lyase from Shigella flexneri.